We begin with the raw amino-acid sequence, 283 residues long: Pantoate--beta-alanine ligase (283 aa).

This sequence belongs to the pantothenate synthetase family.

It catalyses the reaction (R)-pantoate + beta-alanine + ATP = (R)-pantothenate + AMP + diphosphate + H(+). It participates in cofactor biosynthesis; (R)-pantothenate biosynthesis; (R)-pantothenate from (R)-pantoate and beta-alanine: step 1/1. This Schizosaccharomyces pombe (strain 972 / ATCC 24843) (Fission yeast) protein is Pantoate--beta-alanine ligase (pan6).